Reading from the N-terminus, the 581-residue chain is NADH-quinone oxidoreductase subunit C/D (581 aa).

The segment at 1 to 172 is NADH dehydrogenase I subunit C; sequence MSAVELVNEL…PPFVMTAARF (172 aa). Residues 196 to 581 form an NADH dehydrogenase I subunit D region; that stretch reads ELMILNYGPH…IDYVMSDVDR (386 aa).

In the N-terminal section; belongs to the complex I 30 kDa subunit family. This sequence in the C-terminal section; belongs to the complex I 49 kDa subunit family. In terms of assembly, NDH-1 is composed of 13 different subunits. Subunits NuoB, CD, E, F, and G constitute the peripheral sector of the complex.

It is found in the cell inner membrane. The catalysed reaction is a quinone + NADH + 5 H(+)(in) = a quinol + NAD(+) + 4 H(+)(out). Its function is as follows. NDH-1 shuttles electrons from NADH, via FMN and iron-sulfur (Fe-S) centers, to quinones in the respiratory chain. The immediate electron acceptor for the enzyme in this species is believed to be ubiquinone. Couples the redox reaction to proton translocation (for every two electrons transferred, four hydrogen ions are translocated across the cytoplasmic membrane), and thus conserves the redox energy in a proton gradient. This chain is NADH-quinone oxidoreductase subunit C/D, found in Rhodopseudomonas palustris (strain BisB18).